A 163-amino-acid chain; its full sequence is Regulatory protein RecX (163 aa).

The segment at 1–21 (MSDAEDIPTGRKRRPREQTPV) is disordered.

It belongs to the RecX family.

The protein resides in the cytoplasm. Modulates RecA activity. This is Regulatory protein RecX from Stenotrophomonas maltophilia (strain K279a).